A 36-amino-acid chain; its full sequence is Protein YnfP (36 aa).

This is Protein YnfP from Escherichia coli (strain K12).